The following is a 750-amino-acid chain: GTP pyrophosphokinase rsh (750 aa).

One can recognise an HD domain in the interval 45–144 (YFSHPLEVAA…VKLADRLHNM (100 aa)). Positions 390–451 (DQVFCFTPKG…KNGDEVDIIR (62 aa)) constitute a TGS domain. A disordered region spans residues 587-613 (AAKVDPAATTPKPGKRALPIRGTNPDL). The 75-residue stretch at 676–750 (RISVSAINSP…SVSSAKRVNG (75 aa)) folds into the ACT domain.

Belongs to the RelA/SpoT family.

It carries out the reaction GTP + ATP = guanosine 3'-diphosphate 5'-triphosphate + AMP. In terms of biological role, functions as a (p)ppGpp synthase. In eubacteria ppGpp (guanosine 3'-diphosphate 5'-diphosphate) is a mediator of the stringent response that coordinates a variety of cellular activities in response to changes in nutritional abundance. It is necessary for persistence in mice, essential for intracellular growth of Brucella and required for expression of the type IV secretion system VirB and therefore plays a role in adaptation of Brucella to its intracellular host environment. The polypeptide is GTP pyrophosphokinase rsh (rsh) (Brucella melitensis biotype 1 (strain ATCC 23456 / CCUG 17765 / NCTC 10094 / 16M)).